Consider the following 138-residue polypeptide: Probable lactoylglutathione lyase (138 aa).

A VOC domain is found at R5 to N129. H8 contacts Ni(2+). R12 lines the substrate pocket. E59 lines the Ni(2+) pocket. Substrate is bound by residues N63 and H77. Positions 77 and 125 each coordinate Ni(2+). Catalysis depends on E125, which acts as the Proton donor/acceptor.

It belongs to the glyoxalase I family. Requires Ni(2+) as cofactor.

The catalysed reaction is (R)-S-lactoylglutathione = methylglyoxal + glutathione. It functions in the pathway secondary metabolite metabolism; methylglyoxal degradation; (R)-lactate from methylglyoxal: step 1/2. Its function is as follows. Catalyzes the conversion of hemimercaptal, formed from methylglyoxal and glutathione, to S-lactoylglutathione. In Vibrio parahaemolyticus serotype O3:K6 (strain RIMD 2210633), this protein is Probable lactoylglutathione lyase (gloA).